The following is an 817-amino-acid chain: Lon protease (817 aa).

One can recognise a Lon N-terminal domain in the interval 44-239 (LPILPLRNTV…ETLRYMNVEL (196 aa)). 390-397 (GPPGVGKT) serves as a coordination point for ATP. Positions 626-807 (NDVAGVVTGL…SEVLAIALTD (182 aa)) constitute a Lon proteolytic domain. Active-site residues include S713 and K756.

Belongs to the peptidase S16 family. In terms of assembly, homohexamer. Organized in a ring with a central cavity.

It localises to the cytoplasm. The catalysed reaction is Hydrolysis of proteins in presence of ATP.. Functionally, ATP-dependent serine protease that mediates the selective degradation of mutant and abnormal proteins as well as certain short-lived regulatory proteins. Required for cellular homeostasis and for survival from DNA damage and developmental changes induced by stress. Degrades polypeptides processively to yield small peptide fragments that are 5 to 10 amino acids long. Binds to DNA in a double-stranded, site-specific manner. The chain is Lon protease from Flavobacterium johnsoniae (strain ATCC 17061 / DSM 2064 / JCM 8514 / BCRC 14874 / CCUG 350202 / NBRC 14942 / NCIMB 11054 / UW101) (Cytophaga johnsonae).